Here is a 452-residue protein sequence, read N- to C-terminus: MKETIVAQATAPGRGGIGILRVSGPLATKVAQAILGKCPKPRMADYLPFKDADGTILDQGIALYFKSPNSFTGEDVLELQGHGGQVVLDLLLKRILQIDGIRLARPGEFSEQAFLNDKLDLAQAEAIADLIDATSEQAARSALKSLQGEFSKKVNELVDSVIYLRTYVEASIDFPDEEIDFLADGKIEANLRGIINQLENVRSEAKQGSILREGMKVVIAGRPNAGKSSLLNALAGREAAIVTDIAGTTRDVLREHIHIDGMPLHIIDTAGLRDATDEVERIGISRAWTEIEQADRIILMLDSSDPESADLSKVRSEFLAKLPSTLPVTIVRNKIDLNGEQASESEQGGYQIISLSAQTHDGVKLLRDHLKQAMGFQTGIEGGFLARRRHLDALEKAAEHLQIGLVQLTEFHAGELLAEELRLVQSYLSEITGQFTSDDLLGNIFSSFCIGK.

Residues arginine 21, glutamate 78, and lysine 118 each contribute to the (6S)-5-formyl-5,6,7,8-tetrahydrofolate site. One can recognise a TrmE-type G domain in the interval 214-375 (GMKVVIAGRP…LRDHLKQAMG (162 aa)). Asparagine 224 lines the K(+) pocket. GTP-binding positions include 224–229 (NAGKSS), 243–249 (TDIAGTT), and 268–271 (DTAG). Serine 228 provides a ligand contact to Mg(2+). Threonine 243, isoleucine 245, and threonine 248 together coordinate K(+). Threonine 249 contributes to the Mg(2+) binding site. A (6S)-5-formyl-5,6,7,8-tetrahydrofolate-binding site is contributed by lysine 452.

It belongs to the TRAFAC class TrmE-Era-EngA-EngB-Septin-like GTPase superfamily. TrmE GTPase family. In terms of assembly, homodimer. Heterotetramer of two MnmE and two MnmG subunits. K(+) is required as a cofactor.

The protein localises to the cytoplasm. Exhibits a very high intrinsic GTPase hydrolysis rate. Involved in the addition of a carboxymethylaminomethyl (cmnm) group at the wobble position (U34) of certain tRNAs, forming tRNA-cmnm(5)s(2)U34. The sequence is that of tRNA modification GTPase MnmE from Haemophilus influenzae (strain 86-028NP).